A 128-amino-acid chain; its full sequence is UPF0325 protein YaeH (128 aa).

It belongs to the UPF0325 family.

The chain is UPF0325 protein YaeH from Escherichia fergusonii (strain ATCC 35469 / DSM 13698 / CCUG 18766 / IAM 14443 / JCM 21226 / LMG 7866 / NBRC 102419 / NCTC 12128 / CDC 0568-73).